Reading from the N-terminus, the 285-residue chain is NADPH-dependent 7-cyano-7-deazaguanine reductase (285 aa).

91–93 (IES) contributes to the substrate binding site. NADPH is bound at residue 93-94 (SK). Cys193 functions as the Thioimide intermediate in the catalytic mechanism. Asp200 acts as the Proton donor in catalysis. 232–233 (HE) provides a ligand contact to substrate. 261-262 (RG) contributes to the NADPH binding site.

This sequence belongs to the GTP cyclohydrolase I family. QueF type 2 subfamily. In terms of assembly, homodimer.

It is found in the cytoplasm. The enzyme catalyses 7-aminomethyl-7-carbaguanine + 2 NADP(+) = 7-cyano-7-deazaguanine + 2 NADPH + 3 H(+). Its pathway is tRNA modification; tRNA-queuosine biosynthesis. Catalyzes the NADPH-dependent reduction of 7-cyano-7-deazaguanine (preQ0) to 7-aminomethyl-7-deazaguanine (preQ1). The sequence is that of NADPH-dependent 7-cyano-7-deazaguanine reductase from Shewanella frigidimarina (strain NCIMB 400).